The sequence spans 351 residues: UPF0764 protein C16orf89 homolog (351 aa).

Residues 1-25 (MKSLKMLYPLFMLLVLSSKIDLSNQ) form the signal peptide.

This sequence belongs to the UPF0764 family. Homodimer.

The protein resides in the secreted. The protein is UPF0764 protein C16orf89 homolog of Danio rerio (Zebrafish).